Reading from the N-terminus, the 800-residue chain is uncharacterized protein (800 aa).

Positions 1–21 (MNRFFISTLLLLAQHLAPAAA) are cleaved as a signal peptide. Residues 63-72 (SLSTGSPVEI) show a composition bias toward polar residues. Disordered stretches follow at residues 63-470 (SLST…PLTT), 602-670 (TPIT…SSTS), and 710-776 (SSLS…TPSS). Low complexity-rich tracts occupy residues 73-314 (TSTS…SSTS), 321-368 (STSS…SSTS), 375-444 (STSS…TSTP), and 451-470 (TTSTSVPYTSTPVTSTPLTT). Low complexity predominate over residues 710–720 (SSLSSIPNNST). Residues 721 to 734 (EVKTASTSSGTEIK) show a composition bias toward polar residues. Over residues 735–776 (TASTSSGSSSSSSYTPASSTSTTTSSVSSRQSSSSSSFTPSS) the composition is skewed to low complexity.

The protein resides in the secreted. Its subcellular location is the cell surface. This is an uncharacterized protein from Schizosaccharomyces pombe (strain 972 / ATCC 24843) (Fission yeast).